The chain runs to 426 residues: Inositol hexakisphosphate kinase 2 (426 aa).

ATP is bound by residues 207 to 209 and Asp220; that span reads ENL. Residues Lys222 and 236 to 243 contribute to the substrate site; that span reads KAANQIRK. An ATP-binding site is contributed by Asp383. His386 contacts substrate.

The protein belongs to the inositol phosphokinase (IPK) family.

It localises to the nucleus. The enzyme catalyses 1D-myo-inositol hexakisphosphate + ATP = 5-diphospho-1D-myo-inositol 1,2,3,4,6-pentakisphosphate + ADP. The protein operates within phospholipid metabolism; phosphatidylinositol metabolism. Inhibited by flavonoids, including myricetin, quercetin, luteolin, isorhamnetin, rhamnetin, kaempferol, diosmetin and apigenin. Converts inositol hexakisphosphate (InsP6) to diphosphoinositol pentakisphosphate (InsP7/PP-InsP5). The sequence is that of Inositol hexakisphosphate kinase 2 from Homo sapiens (Human).